Here is an 87-residue protein sequence, read N- to C-terminus: UPF0147 protein AF_2370.1 (87 aa).

The protein belongs to the UPF0147 family.

This chain is UPF0147 protein AF_2370.1, found in Archaeoglobus fulgidus (strain ATCC 49558 / DSM 4304 / JCM 9628 / NBRC 100126 / VC-16).